The sequence spans 200 residues: ATP-dependent Clp protease proteolytic subunit 1 (200 aa).

Residue Ser-102 is the Nucleophile of the active site. Residue His-127 is part of the active site.

The protein belongs to the peptidase S14 family. Fourteen ClpP subunits assemble into 2 heptameric rings which stack back to back to give a disk-like structure with a central cavity, resembling the structure of eukaryotic proteasomes.

It is found in the cytoplasm. It carries out the reaction Hydrolysis of proteins to small peptides in the presence of ATP and magnesium. alpha-casein is the usual test substrate. In the absence of ATP, only oligopeptides shorter than five residues are hydrolyzed (such as succinyl-Leu-Tyr-|-NHMec, and Leu-Tyr-Leu-|-Tyr-Trp, in which cleavage of the -Tyr-|-Leu- and -Tyr-|-Trp bonds also occurs).. In terms of biological role, cleaves peptides in various proteins in a process that requires ATP hydrolysis. Has a chymotrypsin-like activity. Plays a major role in the degradation of misfolded proteins. This Bradyrhizobium diazoefficiens (strain JCM 10833 / BCRC 13528 / IAM 13628 / NBRC 14792 / USDA 110) protein is ATP-dependent Clp protease proteolytic subunit 1.